We begin with the raw amino-acid sequence, 292 residues long: 4-hydroxy-tetrahydrodipicolinate synthase (292 aa).

Thr-45 contributes to the pyruvate binding site. Tyr-133 serves as the catalytic Proton donor/acceptor. Lys-161 (schiff-base intermediate with substrate) is an active-site residue. Ile-203 is a binding site for pyruvate.

It belongs to the DapA family. As to quaternary structure, homodimer.

The protein resides in the cytoplasm. The catalysed reaction is L-aspartate 4-semialdehyde + pyruvate = (2S,4S)-4-hydroxy-2,3,4,5-tetrahydrodipicolinate + H2O + H(+). It functions in the pathway amino-acid biosynthesis; L-lysine biosynthesis via DAP pathway; (S)-tetrahydrodipicolinate from L-aspartate: step 3/4. Its function is as follows. Catalyzes the condensation of (S)-aspartate-beta-semialdehyde [(S)-ASA] and pyruvate to 4-hydroxy-tetrahydrodipicolinate (HTPA). This Pseudomonas putida (strain W619) protein is 4-hydroxy-tetrahydrodipicolinate synthase.